The following is a 179-amino-acid chain: Large ribosomal subunit protein uL5 (179 aa).

This sequence belongs to the universal ribosomal protein uL5 family. Part of the 50S ribosomal subunit; part of the 5S rRNA/L5/L18/L25 subcomplex. Contacts the 5S rRNA and the P site tRNA. Forms a bridge to the 30S subunit in the 70S ribosome.

This is one of the proteins that bind and probably mediate the attachment of the 5S RNA into the large ribosomal subunit, where it forms part of the central protuberance. In the 70S ribosome it contacts protein S13 of the 30S subunit (bridge B1b), connecting the 2 subunits; this bridge is implicated in subunit movement. Contacts the P site tRNA; the 5S rRNA and some of its associated proteins might help stabilize positioning of ribosome-bound tRNAs. This chain is Large ribosomal subunit protein uL5, found in Paraburkholderia phymatum (strain DSM 17167 / CIP 108236 / LMG 21445 / STM815) (Burkholderia phymatum).